The chain runs to 316 residues: MQILLANPRGFCAGVDRAISIVENALAIYGAPIYVRHEVVHNRYVVDSLRKRGAIFIEQISEVPDGAILIFSAHGVSQAVRNEAKSRDLTVFDATCPLVTKVHMEVARASRRGEESILIGHAGHPEVEGTMGQYSNPEGGMYLVESPEDVWTLNVKNEGKLSFMTQTTLSVDDTSDVIDALRKRFPKIVGPRKDDICYATTNRQEAVRALAEQADVVLVVGSKNSSNSNRLAELAQRMGRTAFLIDDATDIQEAWVKDAACVGVTAGASAPDILVQNVIARLREFGGGEAVTLEGREENIVFEVPKELRVDVREVE.

Cys-12 serves as a coordination point for [4Fe-4S] cluster. (2E)-4-hydroxy-3-methylbut-2-enyl diphosphate-binding residues include His-41 and His-74. 2 residues coordinate dimethylallyl diphosphate: His-41 and His-74. His-41 and His-74 together coordinate isopentenyl diphosphate. Cys-96 contacts [4Fe-4S] cluster. His-124 provides a ligand contact to (2E)-4-hydroxy-3-methylbut-2-enyl diphosphate. His-124 contributes to the dimethylallyl diphosphate binding site. His-124 provides a ligand contact to isopentenyl diphosphate. The active-site Proton donor is Glu-126. (2E)-4-hydroxy-3-methylbut-2-enyl diphosphate is bound at residue Thr-167. Residue Cys-197 participates in [4Fe-4S] cluster binding. 4 residues coordinate (2E)-4-hydroxy-3-methylbut-2-enyl diphosphate: Ser-225, Ser-226, Asn-227, and Ser-269. Dimethylallyl diphosphate-binding residues include Ser-225, Ser-226, Asn-227, and Ser-269. 4 residues coordinate isopentenyl diphosphate: Ser-225, Ser-226, Asn-227, and Ser-269.

It belongs to the IspH family. Homodimer. [4Fe-4S] cluster is required as a cofactor.

It carries out the reaction isopentenyl diphosphate + 2 oxidized [2Fe-2S]-[ferredoxin] + H2O = (2E)-4-hydroxy-3-methylbut-2-enyl diphosphate + 2 reduced [2Fe-2S]-[ferredoxin] + 2 H(+). The enzyme catalyses dimethylallyl diphosphate + 2 oxidized [2Fe-2S]-[ferredoxin] + H2O = (2E)-4-hydroxy-3-methylbut-2-enyl diphosphate + 2 reduced [2Fe-2S]-[ferredoxin] + 2 H(+). Its pathway is isoprenoid biosynthesis; dimethylallyl diphosphate biosynthesis; dimethylallyl diphosphate from (2E)-4-hydroxy-3-methylbutenyl diphosphate: step 1/1. It functions in the pathway isoprenoid biosynthesis; isopentenyl diphosphate biosynthesis via DXP pathway; isopentenyl diphosphate from 1-deoxy-D-xylulose 5-phosphate: step 6/6. Functionally, catalyzes the conversion of 1-hydroxy-2-methyl-2-(E)-butenyl 4-diphosphate (HMBPP) into a mixture of isopentenyl diphosphate (IPP) and dimethylallyl diphosphate (DMAPP). Acts in the terminal step of the DOXP/MEP pathway for isoprenoid precursor biosynthesis. The chain is 4-hydroxy-3-methylbut-2-enyl diphosphate reductase from Salmonella schwarzengrund (strain CVM19633).